Reading from the N-terminus, the 382-residue chain is Porin-like protein BU359 (382 aa).

The signal sequence occupies residues 1-23 (MTNRKSLAMVIPMLLAASNGVNA).

It belongs to the Gram-negative porin family. As to quaternary structure, homotrimer.

It is found in the cell outer membrane. Forms pores that allow passive diffusion of small molecules across the membrane. This chain is Porin-like protein BU359, found in Buchnera aphidicola subsp. Acyrthosiphon pisum (strain APS) (Acyrthosiphon pisum symbiotic bacterium).